The primary structure comprises 514 residues: Alstonine synthase (514 aa).

A helical membrane pass occupies residues P4–I24. N428 carries an N-linked (GlcNAc...) asparagine glycan. C450 contacts heme.

This sequence belongs to the cytochrome P450 family. It depends on heme as a cofactor.

It localises to the membrane. It carries out the reaction tetrahydroalstonine + A + reduced [NADPH--hemoprotein reductase] + O2 = alstonine + AH2 + oxidized [NADPH--hemoprotein reductase] + 2 H2O + H(+). It participates in alkaloid biosynthesis. Functionally, a cytochrome P450 monooxygenase involved in the biosynthesis of pentacyclic alkaloids natural products such as alstonine, putative antipsychotic compounds. Catalyzes the conversion of tetrahydroalstonine to alstonine. No oxidative activity towards ajmalicine. The polypeptide is Alstonine synthase (Alstonia scholaris (Dogbane)).